A 546-amino-acid polypeptide reads, in one-letter code: MSLSQNAPKSKGIKREELKKQYEDVEDEEEIGSDDDLTRGKRRKTEKEKQKLEESELVEMKKLENLIFGSLYSPVTFGKEEEEDGSALFHVDRSAVRQIPDYEDDGDDDEELSDEENGQVVAIRKGEAAWEDEEEKQINVDIASVNRLRKLRKEENEGLISGSEYIARLRAHHAKLNPGTDWARPDSQIVDGESSDDDDTQDGGVDDILRTNEDLVVKSRGNKLCAGRLEYSKLVDANAADPSNGPINSVHFHQNAQLLLTAGLDRRLRFFQIDGKRNTKIQSIFLEDCPIRKAAFLPNGSQVIVSGRRKFFYSFDLEKAKFDKIGPLVGREEKSLEYFEVSQDSNTIAFVGNEGYILLVSTKTKELIGTLKMNGSVRSLAFSEDGKHLLSSGGDGQVYVWDLRTMKCLYKGVDEGSTCGTSLCSSLNGALFASGTDRGIVNIYKKSEFVGGKRKPIKTVDNLTSKIDFMKFNHDAQILAIVSTMNKNSVKLVHVPSLTVFSNWPPPNSTMHYPRCLDFSPGSGFMAMGNAAGKVLLYKLHHYQNA.

Disordered stretches follow at residues 1-55 (MSLS…LEES), 94-118 (SAVRQIPDYEDDGDDDEELSDEENG), and 177-205 (NPGTDWARPDSQIVDGESSDDDDTQDGGV). Over residues 13–23 (IKREELKKQYE) the composition is skewed to basic and acidic residues. The segment covering 24–35 (DVEDEEEIGSDD) has biased composition (acidic residues). Residue Ser33 is modified to Phosphoserine. A compositionally biased stretch (basic and acidic residues) spans 45–55 (TEKEKQKLEES). Composition is skewed to acidic residues over residues 101 to 117 (DYEDDGDDDEELSDEEN) and 193 to 205 (ESSDDDDTQDGGV). WD repeat units lie at residues 242–281 (PSNGPINSVHFHQNAQLLLTAGLDRRLRFFQIDGKRNTKI), 372–411 (KMNGSVRSLAFSEDGKHLLSSGGDGQVYVWDLRTMKCLYK), 413–454 (VDEG…GGKR), and 509–545 (STMHYPRCLDFSPGSGFMAMGNAAGKVLLYKLHHYQN). Residues 389–404 (LLSSGGDGQVYVWDLR) carry the DWD box motif.

The protein belongs to the WD repeat UTP18 family.

It localises to the nucleus. Its subcellular location is the nucleolus. In terms of biological role, involved in nucleolar processing of pre-18S ribosomal RNA. The polypeptide is U3 small nucleolar RNA-associated protein 18 homolog (Arabidopsis thaliana (Mouse-ear cress)).